The chain runs to 187 residues: Orotate phosphoribosyltransferase (187 aa).

5-phospho-alpha-D-ribose 1-diphosphate contacts are provided by residues R99, K100, K103, H105, and D125–S133. T129 and R157 together coordinate orotate.

This sequence belongs to the purine/pyrimidine phosphoribosyltransferase family. PyrE subfamily. Homodimer. It depends on Mg(2+) as a cofactor.

It catalyses the reaction orotidine 5'-phosphate + diphosphate = orotate + 5-phospho-alpha-D-ribose 1-diphosphate. Its pathway is pyrimidine metabolism; UMP biosynthesis via de novo pathway; UMP from orotate: step 1/2. In terms of biological role, catalyzes the transfer of a ribosyl phosphate group from 5-phosphoribose 1-diphosphate to orotate, leading to the formation of orotidine monophosphate (OMP). The sequence is that of Orotate phosphoribosyltransferase from Leptospira borgpetersenii serovar Hardjo-bovis (strain JB197).